Here is a 539-residue protein sequence, read N- to C-terminus: CTP synthase (539 aa).

Residues 1–267 form an amidoligase domain region; the sequence is MKEAKFIFVT…GTQVLEHFHL (267 aa). Residue Ser15 participates in CTP binding. Ser15 is a UTP binding site. Residues 16–21 and Asp73 contribute to the ATP site; that span reads SLGKGL. The Mg(2+) site is built by Asp73 and Glu141. Residues 148 to 150, 188 to 193, and Lys224 contribute to the CTP site; these read DIE and KTKPTQ. UTP contacts are provided by residues 188-193 and Lys224; that span reads KTKPTQ. Residues 292-536 enclose the Glutamine amidotransferase type-1 domain; it reads TVSIVGKYTE…IKAVVNKVKK (245 aa). Gly359 serves as a coordination point for L-glutamine. Cys386 (nucleophile; for glutamine hydrolysis) is an active-site residue. Residues 387 to 390, Glu410, and Arg464 contribute to the L-glutamine site; that span reads LGMQ. Catalysis depends on residues His509 and Glu511.

The protein belongs to the CTP synthase family. In terms of assembly, homotetramer.

It catalyses the reaction UTP + L-glutamine + ATP + H2O = CTP + L-glutamate + ADP + phosphate + 2 H(+). The catalysed reaction is L-glutamine + H2O = L-glutamate + NH4(+). It carries out the reaction UTP + NH4(+) + ATP = CTP + ADP + phosphate + 2 H(+). It functions in the pathway pyrimidine metabolism; CTP biosynthesis via de novo pathway; CTP from UDP: step 2/2. With respect to regulation, allosterically activated by GTP, when glutamine is the substrate; GTP has no effect on the reaction when ammonia is the substrate. The allosteric effector GTP functions by stabilizing the protein conformation that binds the tetrahedral intermediate(s) formed during glutamine hydrolysis. Inhibited by the product CTP, via allosteric rather than competitive inhibition. Its function is as follows. Catalyzes the ATP-dependent amination of UTP to CTP with either L-glutamine or ammonia as the source of nitrogen. Regulates intracellular CTP levels through interactions with the four ribonucleotide triphosphates. This Wolbachia sp. subsp. Brugia malayi (strain TRS) protein is CTP synthase.